Consider the following 265-residue polypeptide: MEKVKAKKQYGQNFLKDSTILDKIIQSMPNNNNHIVEIGPGLGDLTKNLVKYKDLTAYEVDTDLIGILKSKFAIEIEKGNLKLIHTDVLEAWDKLKNLHDGKYDLIANLPYYIATNIILRAFEDELCEHIIVMVQKEVAEKFTAKTNDKEYSSLGIITELISINSKILFDVPAEAFDPPPKVTSSILYIKKDMSKSLDKDFNKFLKACFIQPRKKLSKNLTTIFDKNIIFEIYKELNINDNVRPHEVSSSLYSQMYTKVKNGRNK.

S-adenosyl-L-methionine-binding residues include N13, L15, G39, E59, D87, and N108.

This sequence belongs to the class I-like SAM-binding methyltransferase superfamily. rRNA adenine N(6)-methyltransferase family. RsmA subfamily.

Its subcellular location is the cytoplasm. The enzyme catalyses adenosine(1518)/adenosine(1519) in 16S rRNA + 4 S-adenosyl-L-methionine = N(6)-dimethyladenosine(1518)/N(6)-dimethyladenosine(1519) in 16S rRNA + 4 S-adenosyl-L-homocysteine + 4 H(+). In terms of biological role, specifically dimethylates two adjacent adenosines (A1518 and A1519) in the loop of a conserved hairpin near the 3'-end of 16S rRNA in the 30S particle. May play a critical role in biogenesis of 30S subunits. The polypeptide is Ribosomal RNA small subunit methyltransferase A (Aliarcobacter butzleri (strain RM4018) (Arcobacter butzleri)).